We begin with the raw amino-acid sequence, 481 residues long: Proline--tRNA ligase (481 aa).

The protein belongs to the class-II aminoacyl-tRNA synthetase family. ProS type 3 subfamily. As to quaternary structure, homodimer.

Its subcellular location is the cytoplasm. It catalyses the reaction tRNA(Pro) + L-proline + ATP = L-prolyl-tRNA(Pro) + AMP + diphosphate. Catalyzes the attachment of proline to tRNA(Pro) in a two-step reaction: proline is first activated by ATP to form Pro-AMP and then transferred to the acceptor end of tRNA(Pro). The protein is Proline--tRNA ligase of Saccharolobus islandicus (strain Y.N.15.51 / Yellowstone #2) (Sulfolobus islandicus).